Reading from the N-terminus, the 1462-residue chain is NK-tumor recognition protein (1462 aa).

The region spanning 10 to 175 (HFDIEINREP…ADVRVIDCGV (166 aa)) is the PPIase cyclophilin-type domain. 2 disordered regions span residues 187 to 591 (KKRK…TMAQ) and 607 to 627 (VIPL…KPWK). The segment covering 198–213 (SDSSSNSSSSSESSSE) has biased composition (low complexity). Residues 221–240 (SRRRKHKRRPKVKRSKKRRK) show a composition bias toward basic residues. Basic and acidic residues-rich tracts occupy residues 241 to 250 (EASSSEEPRN) and 258 to 286 (GHSE…RPEE). Residue K323 forms a Glycyl lysine isopeptide (Lys-Gly) (interchain with G-Cter in SUMO2) linkage. The segment covering 329–345 (SGRKIKGRGTIRYHTPP) has biased composition (basic residues). Phosphoserine occurs at positions 379, 401, and 416. The span at 382–402 (KWSKGDKLSDPCSSRWDERSL) shows a compositional bias: basic and acidic residues. Over residues 403–421 (SQRSRSWSYNGYYSDLSTA) the composition is skewed to polar residues. The segment covering 423–459 (HSGHHKKRRKEKKVKHKKKGKKQKHCRRHKQTKKRRI) has biased composition (basic residues). Phosphoserine is present on residues S463 and S471. Residues 497-507 (KRDWSKSDKDV) show a composition bias toward basic and acidic residues. The span at 524–542 (HSQSYSRGSSRSRTASKSS) shows a compositional bias: low complexity. The segment covering 543–568 (SHSRSRSKSRSSSKSGHRKRASKSPR) has biased composition (basic residues). Residues K578 and K581 each participate in a glycyl lysine isopeptide (Lys-Gly) (interchain with G-Cter in SUMO2) cross-link. The residue at position 613 (S613) is a Phosphoserine. K639 is covalently cross-linked (Glycyl lysine isopeptide (Lys-Gly) (interchain with G-Cter in SUMO2)). Position 648 is a phosphoserine (S648). Residues K656 and K666 each participate in a glycyl lysine isopeptide (Lys-Gly) (interchain with G-Cter in SUMO2) cross-link. Positions 658 to 1072 (TGSSSSYHKR…EEDLSGKHDT (415 aa)) are disordered. 2 stretches are compositionally biased toward low complexity: residues 699–725 (SRSY…PSSR) and 736–749 (SQCS…SISS). Positions 754–774 (RAKRRLRSSGKKNSVSHKKHS) are enriched in basic residues. A compositionally biased stretch (basic and acidic residues) spans 775-800 (SSSEKTLHSKYVKGRDRSSCVRKYSE). A compositionally biased stretch (low complexity) spans 801–815 (SRSSLDYSSDSEQSS). 2 stretches are compositionally biased toward basic and acidic residues: residues 823-870 (QEKE…DHLR) and 885-909 (WDSE…SSDK). S866, S887, S889, S891, and S907 each carry phosphoserine. Over residues 910–922 (EEGEATSDSESEV) the composition is skewed to acidic residues. A compositionally biased stretch (polar residues) spans 932 to 969 (TTKSSTNTSLPDDNGAWKSSKQRTSTSDSEGSCSNSEN). Residues 988–1013 (EHTKKVKEKLKGKKDKKHKAPKRKQA) are compositionally biased toward basic residues. Over residues 1022–1031 (FGEEEEEEID) the composition is skewed to acidic residues. Basic and acidic residues predominate over residues 1032–1072 (DKQVTQESKEKKVSENNETIKDNILKTEKSSEEDLSGKHDT). K1057 participates in a covalent cross-link: Glycyl lysine isopeptide (Lys-Gly) (interchain with G-Cter in SUMO2). Phosphoserine occurs at positions 1077 and 1146. A disordered region spans residues 1129 to 1156 (MEICTPDRSSPAKVEETSPLGNARLDTP). Residue T1155 is modified to Phosphothreonine. K1163 participates in a covalent cross-link: Glycyl lysine isopeptide (Lys-Gly) (interchain with G-Cter in SUMO2). Residues 1169–1215 (EHPQAEVVKQESSMSESKVLGEVGKQDSSSASLASAGESTGKKEVAE) are disordered. A Glycyl lysine isopeptide (Lys-Gly) (interchain with G-Cter in SUMO1); alternate cross-link involves residue K1177. K1177 participates in a covalent cross-link: Glycyl lysine isopeptide (Lys-Gly) (interchain with G-Cter in SUMO2); alternate. S1203 is subject to Phosphoserine. Residues K1216, K1225, and K1258 each participate in a glycyl lysine isopeptide (Lys-Gly) (interchain with G-Cter in SUMO2) cross-link. The segment at 1251–1462 (LTTVPEMKPQ…RSPSESSRYS (212 aa)) is disordered. The segment at 1311–1348 (SRSPSRSRSKSETKSRHRTRSVSYSHSRSRSRSSTSSY) is arg/Ser tandem repeat-rich. 2 stretches are compositionally biased toward low complexity: residues 1331–1351 (SVSY…YRSR) and 1359–1376 (RGWY…SYRS). Residues 1377–1388 (YKSHRTSSRSRS) are compositionally biased toward basic residues. Residues 1389 to 1410 (RSSSYDPHSRSRSYTYDSYYSR) show a composition bias toward low complexity. A compositionally biased stretch (basic residues) spans 1425–1435 (RGRSYNRRSRS).

The protein resides in the cell membrane. The catalysed reaction is [protein]-peptidylproline (omega=180) = [protein]-peptidylproline (omega=0). With respect to regulation, inhibited by cyclosporin A (CsA). In terms of biological role, PPIase that catalyzes the cis-trans isomerization of proline imidic peptide bonds in oligopeptides and may therefore assist protein folding. Component of a putative tumor-recognition complex involved in the function of NK cells. The polypeptide is NK-tumor recognition protein (Homo sapiens (Human)).